The sequence spans 1241 residues: DNA-directed RNA polymerase subunit beta (1241 aa).

Belongs to the RNA polymerase beta chain family. As to quaternary structure, the RNAP catalytic core consists of 2 alpha, 1 beta, 1 beta' and 1 omega subunit. When a sigma factor is associated with the core the holoenzyme is formed, which can initiate transcription.

It catalyses the reaction RNA(n) + a ribonucleoside 5'-triphosphate = RNA(n+1) + diphosphate. Functionally, DNA-dependent RNA polymerase catalyzes the transcription of DNA into RNA using the four ribonucleoside triphosphates as substrates. The sequence is that of DNA-directed RNA polymerase subunit beta from Clostridium botulinum (strain Alaska E43 / Type E3).